Consider the following 223-residue polypeptide: Keratin-associated protein 5-4 (223 aa).

Tandem repeats lie at residues 21-24 (CCKP), 27-30 (CCVP), 79-82 (CCKP), 89-92 (CCKP), 107-110 (CCKP), 117-120 (CCKP), 135-138 (CCKP), 145-148 (CCKP), 155-158 (CCKP), 173-176 (CCKP), 183-186 (CCKP), 193-196 (CCKP), 203-206 (CCKP), and 213-216 (CCAP). The interval 21-216 (CCKPVCCCVP…CCCQSSCCAP (196 aa)) is 14 X 4 AA repeats of C-C-X-P.

It belongs to the KRTAP type 5 family. In terms of assembly, interacts with hair keratins. In terms of tissue distribution, expressed during the active phases of the hair cycle in the medulla and the inner root sheath of the forming hair. Also expressed in the upper layers of the epidermis of skin.

In the hair cortex, hair keratin intermediate filaments are embedded in an interfilamentous matrix, consisting of hair keratin-associated protein (KRTAP), which are essential for the formation of a rigid and resistant hair shaft through their extensive disulfide bond cross-linking with abundant cysteine residues of hair keratins. The matrix proteins include the high-sulfur and high-glycine-tyrosine keratins. The sequence is that of Keratin-associated protein 5-4 from Mus musculus (Mouse).